Reading from the N-terminus, the 222-residue chain is C-reactive protein (222 aa).

An N-terminal signal peptide occupies residues 1–19 (MEKLSLCLLVIISLSNAFA). The residue at position 20 (Gln20) is a Pyrrolidone carboxylic acid. One can recognise a Pentraxin (PTX) domain in the interval 24–222 (IGKAFVFPKE…EVYVKPQLWP (199 aa)). The cysteines at positions 55 and 113 are disulfide-linked. Ca(2+) contacts are provided by Asn78, Glu154, Gln155, Asp156, and Gln166.

This sequence belongs to the pentraxin family. In terms of assembly, homopentamer. Pentraxin (or pentaxin) have a discoid arrangement of 5 non-covalently bound subunits. Interacts with FCN1; may regulate monocyte activation by FCN1. It depends on Ca(2+) as a cofactor. As to expression, found in plasma.

The protein resides in the secreted. Displays several functions associated with host defense: it promotes agglutination, bacterial capsular swelling, phagocytosis and complement fixation through its calcium-dependent binding to phosphorylcholine. Can interact with DNA and histones and may scavenge nuclear material released from damaged circulating cells. This Sus scrofa (Pig) protein is C-reactive protein (CRP).